Consider the following 339-residue polypeptide: Sphingomyelinase D (339 aa).

The N-terminal stretch at 1–21 is a signal peptide; sequence MVSLLRLCSFLLAAGSILVQG. The active site involves His-60. The Mg(2+) site is built by Glu-80, Asp-82, and Asp-128. An SMD-tail motif is present at residues 309-316; the sequence is ATVDDNPW. Positions 313 to 339 are disordered; sequence DNPWSSMSKKGSSKSSWVKGEVPSIAH. Low complexity predominate over residues 317-328; the sequence is SSMSKKGSSKSS.

Belongs to the sphingomyelinase D/phospholipase D family. Mg(2+) is required as a cofactor.

The protein resides in the secreted. It catalyses the reaction a sphingomyelin + H2O = an N-acylsphing-4-enine 1-phosphate + choline + H(+). Functionally, catalyzes the hydrolysis of sphingomyelin. Sphingomyelinases D are produced by some spider in their venoms, but also by arthropods such as ticks, or pathogenic bacteria and fungi. They might play a role in pathogenicity through different mechanisms, such as membrane destabilization and host cell penetration, but also pulmonary inflammation and cutaneous lesions. The polypeptide is Sphingomyelinase D (Arthroderma benhamiae (strain ATCC MYA-4681 / CBS 112371) (Trichophyton mentagrophytes)).